The chain runs to 1036 residues: Pre-mRNA-processing factor 39-2 (1036 aa).

The disordered stretch occupies residues 1–24 (MVTTEVRTAVSDKEPLQRSPELDS). HAT repeat units lie at residues 62-94 (DDIE…HKIK), 96-128 (CTLE…FAVA), 131-166 (EDPH…YLLG), 168-201 (QQWS…IAAS), 278-310 (CFET…FGET), and 312-344 (GDFD…FVES). Disordered stretches follow at residues 595–618 (GISS…YGTQ), 714–767 (PSGS…PVGT), and 995–1036 (KGDE…ISSI). The segment covering 714-726 (PSGSQSPQSYQSQ) has biased composition (low complexity). Over residues 740–755 (RDLNQMHRDSKPRSQE) the composition is skewed to basic and acidic residues. The segment covering 1002–1036 (SMPQGSTTNSDIQKSQESGAVNEANLSSDTSISSI) has biased composition (polar residues).

This sequence belongs to the PRP39 family.

It is found in the nucleus. In terms of biological role, involved in pre-mRNA splicing. The protein is Pre-mRNA-processing factor 39-2 of Arabidopsis thaliana (Mouse-ear cress).